Reading from the N-terminus, the 361-residue chain is sn-glycerol-3-phosphate import ATP-binding protein UgpC (361 aa).

Residues 4-235 (LSLKGVRKSY…PATVFVAGFI (232 aa)) form the ABC transporter domain. Residue 37 to 44 (GPSGCGKS) participates in ATP binding.

It belongs to the ABC transporter superfamily. sn-glycerol-3-phosphate importer (TC 3.A.1.1.3) family. The complex is composed of two ATP-binding proteins (UgpC), two transmembrane proteins (UgpA and UgpE) and a solute-binding protein (UgpB).

The protein resides in the cell inner membrane. The catalysed reaction is sn-glycerol 3-phosphate(out) + ATP + H2O = sn-glycerol 3-phosphate(in) + ADP + phosphate + H(+). Functionally, part of the ABC transporter complex UgpBAEC involved in sn-glycerol-3-phosphate (G3P) import. Responsible for energy coupling to the transport system. This Burkholderia lata (strain ATCC 17760 / DSM 23089 / LMG 22485 / NCIMB 9086 / R18194 / 383) protein is sn-glycerol-3-phosphate import ATP-binding protein UgpC.